The chain runs to 147 residues: D-aminoacyl-tRNA deacylase (147 aa).

The Gly-cisPro motif, important for rejection of L-amino acids signature appears at 137–138 (GP).

Belongs to the DTD family. In terms of assembly, homodimer.

It is found in the cytoplasm. The enzyme catalyses glycyl-tRNA(Ala) + H2O = tRNA(Ala) + glycine + H(+). It catalyses the reaction a D-aminoacyl-tRNA + H2O = a tRNA + a D-alpha-amino acid + H(+). Functionally, an aminoacyl-tRNA editing enzyme that deacylates mischarged D-aminoacyl-tRNAs. Also deacylates mischarged glycyl-tRNA(Ala), protecting cells against glycine mischarging by AlaRS. Acts via tRNA-based rather than protein-based catalysis; rejects L-amino acids rather than detecting D-amino acids in the active site. By recycling D-aminoacyl-tRNA to D-amino acids and free tRNA molecules, this enzyme counteracts the toxicity associated with the formation of D-aminoacyl-tRNA entities in vivo and helps enforce protein L-homochirality. Upon expression in B.subtilis strain 168 confers resistance to D-Tyr and D-Asp, suggesting it acts on both of these amino acids. The polypeptide is D-aminoacyl-tRNA deacylase (Bacillus amyloliquefaciens (Bacillus velezensis)).